Here is a 398-residue protein sequence, read N- to C-terminus: Aldo-keto reductase ausK (398 aa).

D76 is a binding site for NADP(+). The active-site Proton donor is Y81. A substrate-binding site is contributed by H156. Residues C186 to N187, Q212, D241 to R251, and R317 to N325 contribute to the NADP(+) site.

The protein belongs to the aldo/keto reductase family. Aldo/keto reductase 2 subfamily. In terms of assembly, homodimer.

Its pathway is secondary metabolite biosynthesis; terpenoid biosynthesis. Aldo-keto reductase; part of the gene cluster B that mediates the biosynthesis of austinol and dehydroaustinol, two fungal meroterpenoids. The first step of the pathway is the synthesis of 3,5-dimethylorsellinic acid by the polyketide synthase ausA. 3,5-dimethylorsellinic acid is then prenylated by the polyprenyl transferase ausN. Further epoxidation by the FAD-dependent monooxygenase ausM and cyclization by the probable terpene cyclase ausL lead to the formation of protoaustinoid A. Protoaustinoid A is then oxidized to spiro-lactone preaustinoid A3 by the combined action of the FAD-binding monooxygenases ausB and ausC, and the dioxygenase ausE. Acid-catalyzed keto-rearrangement and ring contraction of the tetraketide portion of preaustinoid A3 by ausJ lead to the formation of preaustinoid A4. The aldo-keto reductase ausK, with the help of ausH, is involved in the next step by transforming preaustinoid A4 into isoaustinone which is in turn hydroxylated by the P450 monooxygenase ausI to form austinolide. Finally, the cytochrome P450 monooxygenase ausG modifies austinolide to austinol. Austinol can be further modified to dehydroaustinol which forms a diffusible complex with diorcinol that initiates conidiation. Due to genetic rearrangements of the clusters and the subsequent loss of some enzymes, the end products of the Emericella nidulans austinoid biosynthesis clusters are austinol and dehydroaustinol, even if additional enzymes, such as the O-acetyltransferase ausQ and the cytochrome P450 monooxygenase ausR are still functional. The sequence is that of Aldo-keto reductase ausK from Emericella nidulans (strain FGSC A4 / ATCC 38163 / CBS 112.46 / NRRL 194 / M139) (Aspergillus nidulans).